The following is a 326-amino-acid chain: Lipopolysaccharide heptosyltransferase 1 (326 aa).

Positions 187, 188, 192, 222, and 242 each coordinate ADP. ADP-L-glycero-beta-D-manno-heptose-binding residues include T187, T188, K192, E222, M242, D261, T262, G263, and H266. ADP contacts are provided by T262 and G263.

Belongs to the glycosyltransferase 9 family. In terms of assembly, monomer.

It localises to the cell inner membrane. The catalysed reaction is an alpha-Kdo-(2-&gt;4)-alpha-Kdo-(2-&gt;6)-lipid A + ADP-L-glycero-beta-D-manno-heptose = an L-alpha-D-Hep-(1-&gt;5)-[alpha-Kdo-(2-&gt;4)]-alpha-Kdo-(2-&gt;6)-lipid A + ADP + H(+). It catalyses the reaction alpha-Kdo-(2-&gt;4)-alpha-Kdo-(2-&gt;6)-lipid A (E. coli) + ADP-L-glycero-beta-D-manno-heptose = L-alpha-D-Hep-(1-&gt;5)-[alpha-Kdo-(2-&gt;4)]-alpha-Kdo-(2-&gt;6)-lipid A (E. coli) + ADP + H(+). It functions in the pathway bacterial outer membrane biogenesis; LPS core biosynthesis. With respect to regulation, inhibited by ADP-L-glycero-beta-D-gluco-2-deoxy-2-fluoro-heptose (ADP-2F-heptose), a non-cleavable analog of the substrate ADP-L-glycero-beta-D-manno-heptose. Its function is as follows. Glycosyltransferase involved in the biosynthesis of the core oligosaccharide region of lipopolysaccharide (LPS). Catalyzes the addition of the first heptose unit to one 3-deoxy-D-manno-octulosonic acid (Kdo) residue of the Kdo2-lipid A module. This Escherichia coli O18:K1:H7 (strain RS218 / NMEC) protein is Lipopolysaccharide heptosyltransferase 1.